We begin with the raw amino-acid sequence, 108 residues long: Glutaredoxin-1 (108 aa).

Residues 3–106 (EEFVQQRLAN…DILSSIGVLR (104 aa)) form the Glutaredoxin domain. Cysteine 23 and cysteine 26 form a disulfide bridge.

This sequence belongs to the glutaredoxin family.

It is found in the virion. In terms of biological role, displays thioltransferase and dehydroascorbate reductase activities. This is Glutaredoxin-1 (OPG075) from Vaccinia virus (strain Copenhagen) (VACV).